A 145-amino-acid chain; its full sequence is Internal scaffolding protein VP3 (145 aa).

This sequence belongs to the microviridae B protein family.

It is found in the host cytoplasm. Functionally, participates in the assembly of the viral procapsid in the cytoplasm. Released from the procapsid upon genome packaging, possibly through affinity displacement by the protein ORF8, or by proteolysis. The sequence is that of Internal scaffolding protein VP3 from Chlamydia phage 1 (Bacteriophage Chp1).